The sequence spans 70 residues: uncharacterized protein (70 aa).

The chain crosses the membrane as a helical span at residues 4-24; that stretch reads VKTIAMLAMLVIVAALIYMGY.

It is found in the host membrane. This is an uncharacterized protein from Dryophytes versicolor (chameleon treefrog).